The primary structure comprises 1273 residues: Homeobox protein cut-like ceh-44 (1273 aa).

Coiled coils occupy residues 101 to 407 (LLKG…DGFK) and 440 to 468 (RQKNTDSELIEKIQEAKRNKAVCELKFED). 3 DNA-binding regions (CUT) span residues 591–681 (NVQA…LSPR), 832–919 (QAQY…KQPK), and 978–1065 (IDES…KEES). The tract at residues 1069 to 1100 (VKAKIESVPAPREAPRPVKRKHSSDTDDYDLN) is disordered. Residues 1103–1162 (KPIQRTVITDYQKDTLRFVFVNEQHPSNELCEQISLKLDMSLRTVQNWFHNHRTRSKARE) constitute a DNA-binding region (homeobox).

Belongs to the CUT homeobox family.

The protein localises to the nucleus. Its function is as follows. Probable DNA-binding regulatory protein involved in cell-fate specification. This Caenorhabditis elegans protein is Homeobox protein cut-like ceh-44.